Reading from the N-terminus, the 173-residue chain is MTTVIEFYISDKEREIVIEQLLEFFPKKKNCKDIEKGIYDFTKQYCKSDNSYLRLAQAIYIDCAKNIMFNLKDENNHTIKKIKKLIDKNKYNAYNLAFLNPEELNKDNWIKIIARKQMTEETLNQMATVEWKPCYACKNTSYHFYQLQTRSADEPMTTFYICKNCMKTYKVNN.

The TFIIS central domain occupies I9–V129. The TFIIS-type zinc-finger motif lies at E130–K170. C134, C137, C162, and C165 together coordinate Zn(2+).

This sequence belongs to the TFS-II family.

In Acanthamoeba polyphaga mimivirus (APMV), this protein is Transcription factor S-II-related protein.